We begin with the raw amino-acid sequence, 878 residues long: Phosphoenolpyruvate carboxylase (878 aa).

Active-site residues include His137 and Lys545.

This sequence belongs to the PEPCase type 1 family. Mg(2+) serves as cofactor.

It carries out the reaction oxaloacetate + phosphate = phosphoenolpyruvate + hydrogencarbonate. Functionally, forms oxaloacetate, a four-carbon dicarboxylic acid source for the tricarboxylic acid cycle. This chain is Phosphoenolpyruvate carboxylase, found in Yersinia pestis bv. Antiqua (strain Antiqua).